The primary structure comprises 695 residues: Calcium-binding acidic-repeat protein (695 aa).

The or 23 signal peptide spans 1-20 (MSHLWCWLFLVLCLACLVLS). 6 TSP type-3 repeats span residues 24-38 (KDSD…DEIN), 47-56 (ADSDQDGLTD), 70-82 (KDTD…DGVE), 184-196 (GDSD…DGAE), 202-214 (KDSD…DEEE), and 248-260 (GDSD…DGAE). The tract at residues 45–695 (YNADSDQDGL…TDPWRSDHSV (651 aa)) is disordered. Over residues 59–70 (EVNRHQTHPQDK) the composition is skewed to basic and acidic residues. 3 stretches are compositionally biased toward acidic residues: residues 271 to 283 (ADSD…DGEE), 291 to 306 (PEDP…DGDE), and 313 to 324 (DPEEDDSDEDGV). TSP type-3 repeat units lie at residues 294 to 308 (PDSD…DEVN), 317 to 329 (DDSD…DGAE), 340 to 352 (EDSD…DGAE), 363 to 375 (EDSD…DGAE), 379 to 393 (TDSD…DEVA), 402 to 414 (ADSD…DGAE), 425 to 437 (KDTD…DGVE), 470 to 482 (EDTD…DGAE), 493 to 505 (ADTD…DGAE), 516 to 528 (ADSD…DGAE), 539 to 551 (GDSD…DAAE), 555 to 569 (KDSD…DEVR), 600 to 609 (RDTDGDGVAD), 623 to 635 (ADTD…DGAE), and 646 to 658 (ADSD…DGAE). 2 stretches are compositionally biased toward acidic residues: residues 361 to 370 (NDEDSDDDGI) and 381 to 392 (SDGDGLPDEDEV). Composition is skewed to acidic residues over residues 467–477 (PNDEDTDDDGL) and 491–500 (EDADTDDDGL). A compositionally biased stretch (acidic residues) spans 537-546 (NDGDSDDDGV). The span at 589–603 (EILKHKTDPRNRDTD) shows a compositional bias: basic and acidic residues. Basic and acidic residues predominate over residues 665-679 (NAKDGDSDDDGKADG).

The protein resides in the secreted. It localises to the endoplasmic reticulum. May function as a calcium-binding protein. In Euglena gracilis, this protein is Calcium-binding acidic-repeat protein.